The following is a 156-amino-acid chain: Small ribosomal subunit protein uS7 (156 aa).

Belongs to the universal ribosomal protein uS7 family. In terms of assembly, part of the 30S ribosomal subunit. Contacts proteins S9 and S11.

In terms of biological role, one of the primary rRNA binding proteins, it binds directly to 16S rRNA where it nucleates assembly of the head domain of the 30S subunit. Is located at the subunit interface close to the decoding center, probably blocks exit of the E-site tRNA. This Lactobacillus acidophilus (strain ATCC 700396 / NCK56 / N2 / NCFM) protein is Small ribosomal subunit protein uS7.